The sequence spans 309 residues: UDP-N-acetylenolpyruvoylglucosamine reductase (309 aa).

An FAD-binding PCMH-type domain is found at arginine 34–alanine 199. Residue arginine 179 is part of the active site. The active-site Proton donor is serine 228. Glutamate 298 is an active-site residue.

It belongs to the MurB family. FAD serves as cofactor.

It localises to the cytoplasm. It catalyses the reaction UDP-N-acetyl-alpha-D-muramate + NADP(+) = UDP-N-acetyl-3-O-(1-carboxyvinyl)-alpha-D-glucosamine + NADPH + H(+). The protein operates within cell wall biogenesis; peptidoglycan biosynthesis. Cell wall formation. This Rhodopseudomonas palustris (strain ATCC BAA-98 / CGA009) protein is UDP-N-acetylenolpyruvoylglucosamine reductase.